The chain runs to 557 residues: MKSLLFGTPCSCAIFILVYCIITLFIWFLYTDNLSNAIVDFEYFSIKNLGELGKEAHLQMTETDLVDAQLQNEKYQYNAWLSERIPLKRTLEDYRDPQCLKINYSSEKTVTVSIVIAIQQEHPHTLLRGIYSVITQTSPYLLKEIVLVHDGHPDLDLIRHIHHKLPIVIQLEMESSKGIIHARLTGAGVATGDILVFLNGHMEVTRGWLPPLLEPILLNNQTVTEPIVDAISRESFAYRKLVEPEQLAFDWQLDHIFLPLDQHSWNSLPKPYPSSQLEGRVFAIDRKWFWHLGGWDEGLRDYGGDALELSLKVWQCGGLILAVPCSRVGIIYKRDELEAQMAPNRNPSLQVQKNFKRVVDVWLDEYKLHFYRYNPKLRNLTAESLDKPRDLRRRLNCKSFEWYRSQVAPQIRNHFLHAGLTNYPIGKIMPFVAPHFCLSIKGGFPVIRKCHSTNFEDWTLTSRCQLKHGNMCLDVDYKNNVRATKCTKKLSKNPWHYNYQHSSFVSNGNKCLQIDVNKVGLILSACDSDVTEQRWMFTKVQDFKLDHMRDICLSVNH.

Over 1–4 the chain is Cytoplasmic; sequence MKSL. A helical; Signal-anchor for type II membrane protein membrane pass occupies residues 5–27; it reads LFGTPCSCAIFILVYCIITLFIW. Residues 28–557 lie on the Lumenal side of the membrane; it reads FLYTDNLSNA…MRDICLSVNH (530 aa). N-linked (GlcNAc...) asparagine glycosylation is found at N33 and N103. 5 cysteine pairs are disulfide-bonded: C99-C325, C316-C397, C437-C450, C472-C486, and C511-C526. Residues 109–215 are catalytic subdomain A; it reads TVTVSIVIAI…RGWLPPLLEP (107 aa). Residue N220 is glycosylated (N-linked (GlcNAc...) asparagine). The interval 271–333 is catalytic subdomain B; sequence PYPSSQLEGR…PCSRVGIIYK (63 aa). A glycan (N-linked (GlcNAc...) asparagine) is linked at N379. Residues 456–557 form the Ricin B-type lectin domain; the sequence is EDWTLTSRCQ…MRDICLSVNH (102 aa).

It belongs to the glycosyltransferase 2 family. GalNAc-T subfamily.

The protein resides in the golgi apparatus membrane. Probable inactive glycosyltransferase. This Drosophila melanogaster (Fruit fly) protein is Putative inactive polypeptide N-acetylgalactosaminyltransferase 11.